The sequence spans 482 residues: Alanine aminotransferase 2 (482 aa).

N6-(pyridoxal phosphate)lysine is present on lysine 299.

The protein belongs to the class-I pyridoxal-phosphate-dependent aminotransferase family. Alanine aminotransferase subfamily. In terms of assembly, homodimer. It depends on pyridoxal 5'-phosphate as a cofactor. In terms of processing, the N-terminus is blocked. Mesophyll and bundle sheath cells.

It carries out the reaction L-alanine + 2-oxoglutarate = pyruvate + L-glutamate. The protein operates within photosynthesis; C4 acid pathway. Its pathway is amino-acid degradation; L-alanine degradation via transaminase pathway; pyruvate from L-alanine: step 1/1. Functionally, transfer of C3 units between the cytosol of mesophyll and bundle sheath cells to maintain a nitrogen-carbon balance in the C4-dicarboxylic pathway. This chain is Alanine aminotransferase 2, found in Panicum miliaceum (Proso millet).